Consider the following 173-residue polypeptide: Small ribosomal subunit protein uS7 (173 aa).

This sequence belongs to the universal ribosomal protein uS7 family. In terms of assembly, part of the 30S ribosomal subunit. Contacts proteins S9 and S11.

Functionally, one of the primary rRNA binding proteins, it binds directly to 16S rRNA where it nucleates assembly of the head domain of the 30S subunit. Is located at the subunit interface close to the decoding center, probably blocks exit of the E-site tRNA. This Orientia tsutsugamushi (strain Boryong) (Rickettsia tsutsugamushi) protein is Small ribosomal subunit protein uS7.